The following is a 716-amino-acid chain: Zinc finger protein 840 (716 aa).

Residues 42–113 (VRFRDVAVVF…EREVTGDPCP (72 aa)) enclose the KRAB domain. 18 C2H2-type zinc fingers span residues 151–173 (YECD…QKIH), 207–229 (FECN…QSMH), 235–257 (YKCD…QRFH), 277–299 (FSCN…LLIH), 305–327 (YTCN…QRTH), 333–355 (HKCD…QKTH), 361–383 (FSCN…QQIH), 389–411 (FICS…KGTH), 417–439 (YQCT…QKTH), 445–467 (FACN…KKIH), 473–495 (YECG…KKIH), 501–523 (FVCN…QRTH), 549–571 (FPCN…QQIH), 577–599 (FICS…KGTH), 605–627 (YQCT…QKTH), 633–655 (FTCN…KKIH), 661–683 (YECG…KKIH), and 689–711 (FVCN…QITH). The segment at 515-548 (KLSRHQRTHNKKENSSKSVSNLNKHQKTHAGEKP) is disordered.

Belongs to the krueppel C2H2-type zinc-finger protein family.

It localises to the nucleus. Its function is as follows. May be involved in transcriptional regulation. The chain is Zinc finger protein 840 (ZNF840P) from Homo sapiens (Human).